A 403-amino-acid polypeptide reads, in one-letter code: Glycerophosphocholine acyltransferase 1 (403 aa).

Residues 1–112 (MDHLEFDENT…SGKVVRFRDK (112 aa)) are Cytoplasmic-facing. Residues 113–133 (LSFALGVSTCILTALLVGMAP) form a helical membrane-spanning segment. Residues 134–137 (ESMH) lie on the Lumenal side of the membrane. A helical membrane pass occupies residues 138–155 (LWYTIQLFVYLPLRYYTY). Residues 156 to 161 (QRKGYE) lie on the Cytoplasmic side of the membrane. The helical transmembrane segment at 162 to 182 (YFIADFCYWGNILLLVYIWIF) threads the bilayer. Residues 183-186 (PESR) lie on the Lumenal side of the membrane. A helical transmembrane segment spans residues 187-207 (RLFILSYSISYGTLAWSVVAW). At 208–218 (RNSLLFHSIDK) the chain is on the cytoplasmic side. The helical transmembrane segment at 219–239 (ITSLFIHFFPPLVLHTIVHLT) threads the bilayer. Residue Asn-240 is glycosylated (N-linked (GlcNAc...) asparagine). At 240–262 (NKSYLKDRFPAVLKVKKIDLLSS) the chain is on the lumenal side. A helical membrane pass occupies residues 263–283 (VEIASFFYALWQIWYYFFIQV). At 284-322 (GKQKQIQEGRPTSFTWLSKAYSKTKLGRAVAKLPQNLQP) the chain is on the cytoplasmic side. Residues 323–343 (FVFMIIQYLYSITTMLPCSLW) traverse the membrane as a helical segment. Residues 344-352 (YNNKLYSTA) are Lumenal-facing. Residues 353–373 (FLALIFGWSVWNGASYYIDVF) traverse the membrane as a helical segment. Residues 374-403 (GRRFQKELEALRQQLAETPTNSGSSSALSR) are Cytoplasmic-facing.

This sequence belongs to the GPC1 family.

The protein resides in the endoplasmic reticulum membrane. The protein localises to the golgi apparatus membrane. The enzyme catalyses sn-glycerol 3-phosphocholine + an acyl-CoA = a 1-acyl-sn-glycero-3-phosphocholine + CoA. It catalyses the reaction sn-glycero-3-phosphoethanolamine + an acyl-CoA = a monoacyl-sn-glycero-3-phosphoethanolamine + CoA. It carries out the reaction sn-glycero-3-phosphoethanolamine + (9Z)-octadecenoyl-CoA = (9Z-octadecenoyl)-sn-glycero-3-phosphoethanolamine + CoA. Glycerophosphocholine acyltransferase (GPCAT) that utilizes acyl-CoA to acylate glycero-3-phosphocholine (GPC), forming lysophosphatidylcholine (LPC). Shows broad acyl specificities with a preference for 16:0-CoA, polyunsaturated acyl-CoA, and the hydroxylated ricinoleoyl-CoA. Also catalyzes the acylation of glycero-3-phosphoethanolamine (GPE) with acyl-CoA. In addition to acyl-CoA, GPCAT efficiently utilizes LPC and lysophosphatidylethanolamine (LPE) as acyl donors in the acylation of GPC. Contributes to the maintenance of phosphatidylcholine (PC) homeostasis and might also have specific functions in acyl editing of PC, such as transferring acyl groups modified at the sn-2 position of PC to the sn-1. The sequence is that of Glycerophosphocholine acyltransferase 1 from Schizosaccharomyces pombe (strain 972 / ATCC 24843) (Fission yeast).